Reading from the N-terminus, the 330-residue chain is Peroxidase N1 (330 aa).

An N-terminal signal peptide occupies residues 1–29 (MEYYHHSINKMAMFMVILVLAIDVTMVLG). At Gln30 the chain carries Pyrrolidone carboxylic acid. Intrachain disulfides connect Cys41–Cys117, Cys74–Cys79, Cys123–Cys326, and Cys201–Cys233. The Proton acceptor role is filled by His72. The Ca(2+) site is built by Asp73, Val76, Gly78, Asp80, and Ser82. Pro164 lines the substrate pocket. His194 is a heme b binding site. Thr195 is a binding site for Ca(2+). Asn212 is a glycosylation site (N-linked (GlcNAc...) asparagine). Positions 246 and 254 each coordinate Ca(2+).

It belongs to the peroxidase family. Classical plant (class III) peroxidase subfamily. Ca(2+) is required as a cofactor. Heme b serves as cofactor. As to expression, expressed at a high level in roots and at a trace level in lower leaves. Not expressed in upper leaves, stems, flowers, seeds and shoot apices.

The protein localises to the secreted. The enzyme catalyses 2 a phenolic donor + H2O2 = 2 a phenolic radical donor + 2 H2O. Removal of H(2)O(2), oxidation of toxic reductants, biosynthesis and degradation of lignin, suberization, auxin catabolism, response to environmental stresses such as wounding, pathogen attack and oxidative stress. These functions might be dependent on each isozyme/isoform in each plant tissue. Can use NADH, NADPH and monolignols as substrates. The polypeptide is Peroxidase N1 (Nicotiana tabacum (Common tobacco)).